A 524-amino-acid chain; its full sequence is MGKSFLDCESLIALQEIATNPVDLTLPGTLSQDRIQQYALSAEGFTYSYATERVDDRSLNALRMLAEERELIKQMESMQQGAVMNYIEGFQSESRSVLHTATRAWVRDHDLKDEAASIANHSEREAHRLAEFLYAARSKFSTLVQIGIGGSELGPKAMYFAMQGICPSDKRIFFVSNIDPDNAAEVLKEVDLKQTLIVVVSKSGTTLEPSVNEELFKRAYQDKGLSVADHFVAVTAEGSPMDDKTHYLEVFHLWDSVGGRFSATSMVGGVVLGFAFGYEVFFEFLQGAASMDAHALTPIMEKNLPLLSAMLGIWNRNVLKYPTTAVIPYATGLKYFTAHLQQCGMESNGKSISRQGKEVHFATSPIIWGDVGTNCQHSFFQSLHQGTDIVPVEFIGFLQNQRGIDCVLSGSSSSQKLFANLVAQSLALAQGRDNDNPNKRFKGNRPSSILVAQQLSPRIAGGLLAFYEHKFAFQGFCWGINSFDQEGVSLGKELATQIIGLMSGAAPIEFPEARELLRLFNVLQ.

The active-site Proton donor is the E346. Catalysis depends on residues H377 and K492.

The protein belongs to the GPI family.

Its subcellular location is the cytoplasm. It catalyses the reaction alpha-D-glucose 6-phosphate = beta-D-fructose 6-phosphate. It participates in carbohydrate biosynthesis; gluconeogenesis. The protein operates within carbohydrate degradation; glycolysis; D-glyceraldehyde 3-phosphate and glycerone phosphate from D-glucose: step 2/4. Catalyzes the reversible isomerization of glucose-6-phosphate to fructose-6-phosphate. This Chlamydia muridarum (strain MoPn / Nigg) protein is Glucose-6-phosphate isomerase.